The following is a 70-amino-acid chain: Turripeptide Pal9.2 (70 aa).

Positions methionine 1–glycine 20 are cleaved as a signal peptide. The region spanning glutamine 21–cysteine 70 is the Kazal-like domain. 3 cysteine pairs are disulfide-bonded: cysteine 26–cysteine 56, cysteine 30–cysteine 49, and cysteine 38–cysteine 70.

This sequence belongs to the conopeptide P-like superfamily. As to expression, expressed by the venom duct.

It is found in the secreted. Acts as a neurotoxin by inhibiting an ion channel. May also act as a serine protease inhibitor, since it possess the kazal serine protease inhibitor signature. The polypeptide is Turripeptide Pal9.2 (Polystira albida (White giant-turris)).